A 670-amino-acid polypeptide reads, in one-letter code: MKQIPEDIKKEIEKLVKELNYHNYRYYVLDSPVISDEEYDMMLRRLKELEEKWGYILPDSPTQRVGAAPSEKFEKAEHREPMLSLDNAFSIEELRDFDARVKRLLGSSEEVEYTVEPKYDGLAVELSYKDGLLYKASTRGDGYVGEDITQNIKTIKAIPLRIEGVDKIPEEIDIRGEVYLNIDEFERINKERIEKGEPVFANPRNAASGSVRQLDPSITASRRLYMSCYGIGYVKGIEFKSQIEFIEWLKKGRFPVPAYVKLAKGIEEVIEAIKEIEKLRQGYPFETDGAVVKVNSFELQRKLGTKTREPRWAIAYKYPAHQGITKLKDILASVGRTGVITPVAVLEPVKIGGVTVSRSTLHNWDEVERKDIRVGDYVIVERAGEVIPHIIGVVKDRRTGEEKEVKIPEHCPVCGSKTVREPGEVAVKCINFNCPAQVEERIKHFASRRAMNIEGLGDKTVELLHNKGIIKHFVDLYKLRQEDIKGLPGFAELSSKKLIEAIAKSKKTTLSRLLYALGISQVGEYASKLLAQHFRKLEDLYHIKAEKLVQIPQIGEKTAKTIEQFFNNEENLKAIEELKRMGLKVENPEFEEEKKPSPLKGLTFVITGTLPKPREEVKEMIEKAGGKVSSSVSKNTDYLLVGEDPGSKLAKAQALRVKTLSYEEFLKMLE.

NAD(+)-binding positions include 36–40, 84–85, and Glu116; these read DEEYD and SL. Lys118 acts as the N6-AMP-lysine intermediate in catalysis. Positions 139, 177, 293, and 317 each coordinate NAD(+). Residues Cys411, Cys414, Cys429, and Cys434 each coordinate Zn(2+). In terms of domain architecture, BRCT spans 594 to 670; the sequence is KKPSPLKGLT…SYEEFLKMLE (77 aa).

Belongs to the NAD-dependent DNA ligase family. LigA subfamily. Requires Mg(2+) as cofactor. It depends on Mn(2+) as a cofactor.

The enzyme catalyses NAD(+) + (deoxyribonucleotide)n-3'-hydroxyl + 5'-phospho-(deoxyribonucleotide)m = (deoxyribonucleotide)n+m + AMP + beta-nicotinamide D-nucleotide.. In terms of biological role, DNA ligase that catalyzes the formation of phosphodiester linkages between 5'-phosphoryl and 3'-hydroxyl groups in double-stranded DNA using NAD as a coenzyme and as the energy source for the reaction. It is essential for DNA replication and repair of damaged DNA. The sequence is that of DNA ligase from Thermodesulfovibrio yellowstonii (strain ATCC 51303 / DSM 11347 / YP87).